We begin with the raw amino-acid sequence, 235 residues long: Glycerol-3-phosphate acyltransferase (235 aa).

6 consecutive transmembrane segments (helical) span residues 4–24, 56–76, 94–114, 124–144, 152–172, and 191–211; these read LLAI…IMAG, TVTL…VAFF, LLAG…GFKG, MLIG…LLTI, VASM…KYIF, and FHDS…LGIL.

Belongs to the PlsY family. Probably interacts with PlsX.

It is found in the cell inner membrane. It carries out the reaction an acyl phosphate + sn-glycerol 3-phosphate = a 1-acyl-sn-glycero-3-phosphate + phosphate. Its pathway is lipid metabolism; phospholipid metabolism. Catalyzes the transfer of an acyl group from acyl-phosphate (acyl-PO(4)) to glycerol-3-phosphate (G3P) to form lysophosphatidic acid (LPA). This enzyme utilizes acyl-phosphate as fatty acyl donor, but not acyl-CoA or acyl-ACP. In Chlorobium limicola (strain DSM 245 / NBRC 103803 / 6330), this protein is Glycerol-3-phosphate acyltransferase.